We begin with the raw amino-acid sequence, 803 residues long: Phosphoribosylformylglycinamidine synthase subunit PurL (803 aa).

The active site involves histidine 65. Residues tyrosine 68 and lysine 107 each contribute to the ATP site. Residue glutamate 109 participates in Mg(2+) binding. Substrate is bound by residues 110 to 113 (SHNH) and arginine 132. The active-site Proton acceptor is the histidine 111. Aspartate 133 provides a ligand contact to Mg(2+). Residue glutamine 256 participates in substrate binding. Aspartate 284 contacts Mg(2+). A substrate-binding site is contributed by 328-330 (ESQ). Positions 537 and 574 each coordinate ATP. A Mg(2+)-binding site is contributed by asparagine 575. Serine 577 contacts substrate.

This sequence belongs to the FGAMS family. In terms of assembly, monomer. Part of the FGAM synthase complex composed of 1 PurL, 1 PurQ and 2 PurS subunits.

The protein resides in the cytoplasm. It catalyses the reaction N(2)-formyl-N(1)-(5-phospho-beta-D-ribosyl)glycinamide + L-glutamine + ATP + H2O = 2-formamido-N(1)-(5-O-phospho-beta-D-ribosyl)acetamidine + L-glutamate + ADP + phosphate + H(+). It functions in the pathway purine metabolism; IMP biosynthesis via de novo pathway; 5-amino-1-(5-phospho-D-ribosyl)imidazole from N(2)-formyl-N(1)-(5-phospho-D-ribosyl)glycinamide: step 1/2. In terms of biological role, part of the phosphoribosylformylglycinamidine synthase complex involved in the purines biosynthetic pathway. Catalyzes the ATP-dependent conversion of formylglycinamide ribonucleotide (FGAR) and glutamine to yield formylglycinamidine ribonucleotide (FGAM) and glutamate. The FGAM synthase complex is composed of three subunits. PurQ produces an ammonia molecule by converting glutamine to glutamate. PurL transfers the ammonia molecule to FGAR to form FGAM in an ATP-dependent manner. PurS interacts with PurQ and PurL and is thought to assist in the transfer of the ammonia molecule from PurQ to PurL. The protein is Phosphoribosylformylglycinamidine synthase subunit PurL of Prochlorococcus marinus (strain NATL1A).